The primary structure comprises 201 residues: Urease accessory protein UreG (201 aa).

Residue G11–T18 participates in GTP binding.

It belongs to the SIMIBI class G3E GTPase family. UreG subfamily. Homodimer. UreD, UreF and UreG form a complex that acts as a GTP-hydrolysis-dependent molecular chaperone, activating the urease apoprotein by helping to assemble the nickel containing metallocenter of UreC. The UreE protein probably delivers the nickel.

It localises to the cytoplasm. Functionally, facilitates the functional incorporation of the urease nickel metallocenter. This process requires GTP hydrolysis, probably effectuated by UreG. The polypeptide is Urease accessory protein UreG (Synechococcus sp. (strain CC9605)).